The following is a 280-amino-acid chain: Phosphatidylserine decarboxylase proenzyme (280 aa).

Catalysis depends on charge relay system; for autoendoproteolytic cleavage activity residues D88, H144, and S247. S247 acts as the Schiff-base intermediate with substrate; via pyruvic acid; for decarboxylase activity in catalysis. S247 carries the post-translational modification Pyruvic acid (Ser); by autocatalysis.

It belongs to the phosphatidylserine decarboxylase family. PSD-B subfamily. Prokaryotic type I sub-subfamily. As to quaternary structure, heterodimer of a large membrane-associated beta subunit and a small pyruvoyl-containing alpha subunit. Pyruvate is required as a cofactor. In terms of processing, is synthesized initially as an inactive proenzyme. Formation of the active enzyme involves a self-maturation process in which the active site pyruvoyl group is generated from an internal serine residue via an autocatalytic post-translational modification. Two non-identical subunits are generated from the proenzyme in this reaction, and the pyruvate is formed at the N-terminus of the alpha chain, which is derived from the carboxyl end of the proenzyme. The autoendoproteolytic cleavage occurs by a canonical serine protease mechanism, in which the side chain hydroxyl group of the serine supplies its oxygen atom to form the C-terminus of the beta chain, while the remainder of the serine residue undergoes an oxidative deamination to produce ammonia and the pyruvoyl prosthetic group on the alpha chain. During this reaction, the Ser that is part of the protease active site of the proenzyme becomes the pyruvoyl prosthetic group, which constitutes an essential element of the active site of the mature decarboxylase.

Its subcellular location is the cell membrane. It carries out the reaction a 1,2-diacyl-sn-glycero-3-phospho-L-serine + H(+) = a 1,2-diacyl-sn-glycero-3-phosphoethanolamine + CO2. It participates in phospholipid metabolism; phosphatidylethanolamine biosynthesis; phosphatidylethanolamine from CDP-diacylglycerol: step 2/2. Its function is as follows. Catalyzes the formation of phosphatidylethanolamine (PtdEtn) from phosphatidylserine (PtdSer). The chain is Phosphatidylserine decarboxylase proenzyme from Xanthomonas axonopodis pv. citri (strain 306).